Here is a 192-residue protein sequence, read N- to C-terminus: Cytochrome b-245 light chain (192 aa).

The Cytoplasmic portion of the chain corresponds to 2 to 7 (GQIEWA). The helical transmembrane segment at 8 to 30 (MWANEQALASGLILITGGIVATA) threads the bilayer. Residues 31–35 (GRFTQ) lie on the Extracellular side of the membrane. The helical transmembrane segment at 36–53 (WYFGAYSIAAGVLICLLE) threads the bilayer. The Cytoplasmic portion of the chain corresponds to 54-69 (YPRGKRKKGSTMERCG). An intramembrane segment occupies 70 to 80 (QKYLTSVVKLF). Topologically, residues 81–86 (GPLTRN) are cytoplasmic. A helical membrane pass occupies residues 87–104 (YYVRAALHFLLSVPAGFL). A topological domain (extracellular) is located at residue Leu105. A helical transmembrane segment spans residues 106–126 (ATILGTVCLAIASVIYLLAAI). At 127 to 192 (RGEQWTPIEP…NPMPVTDEVV (66 aa)) the chain is on the cytoplasmic side. The disordered stretch occupies residues 134–192 (IEPKPKERPQVGGTIKQPPTNPPPRPPAEVRKKPSEGEEEAASAGGPQVNPMPVTDEVV). Phosphothreonine is present on Thr147. Lys149 participates in a covalent cross-link: Glycyl lysine isopeptide (Lys-Gly) (interchain with G-Cter in ubiquitin). Phosphoserine is present on residues Ser168 and Ser176.

This sequence belongs to the p22phox family. In terms of assembly, component of the phagocyte NADPH oxidase core complex/cytochrome b558 complex, composed of CYBB (heavy chain (beta)) and CYBA (light chain (alpha)). Component of the phagocyte NADPH oxidase complex composed of an obligatory core heterodimer formed by the membrane proteins CYBA and CYBB and the cytosolic regulatory subunits NCF1/p47-phox, NCF2/p67-phox, NCF4/p40-phox and the small GTPase RAC1 or RAC2. Interacts with NCF1 (via SH3 domain). Interacts with SH3PXD2A. Interacts with DUOX1, DUOX2 and TPO. Interacts with NOX4; this interaction mediates superoxide generation. Interacts with calprotectin (S100A8/9). Interacts with GBP7. Interacts with NOXO1. Forms a heterodimer with NOX3 and is essential for activity and cell membrane localization of NOX3. Interacts with NOX1. Post-translationally, ubiquitinated at Lys-149 likely by RNF145. Phosphorylation at Thr-147 enhances NADPH oxidase activity by promoting NCF1/p47-phox binding. As to expression, the strongest level of expression is found in kidney, peritoneal neutrophils and peritoneal macrophages, and a lower level in spleen and small intestine. Very low level of expression can be noted in brain, liver, testis, and heart.

It localises to the cell membrane. Subunit of NADPH oxidase complexes that is required for the NADPH oxidase activity that generates, in various cell types, superoxide from molecular oxygen utilizing NADPH as an electron donor. Subunit of the phagocyte NADPH oxidase complex that mediates the transfer of electrons from cytosolic NADPH to O2 to produce the superoxide anion (O2(-)). In the activated complex, electrons are first transferred from NADPH to flavin adenine dinucleotide (FAD) and subsequently transferred via two heme molecules to molecular oxygen, producing superoxide through an outer-sphere reaction. Activation of the NADPH oxidase complex is initiated by the assembly of cytosolic subunits of the NADPH oxidase complex with the core NADPH oxidase complex to form a complex at the plasma membrane or phagosomal membrane. This activation process is initiated by phosphorylation dependent binding of the cytosolic NCF1/p47-phox subunit to the C-terminus of CYBA/p22-phox. Aassociates with NOX3 to form a functional NADPH oxidase constitutively generating superoxide. The chain is Cytochrome b-245 light chain from Mus musculus (Mouse).